The primary structure comprises 268 residues: Phosphate import ATP-binding protein PstB (268 aa).

Residues 22–263 (LAVRNLNFYY…PKQQQTQDYI (242 aa)) form the ABC transporter domain. 54–61 (GPSGCGKS) contributes to the ATP binding site.

This sequence belongs to the ABC transporter superfamily. Phosphate importer (TC 3.A.1.7) family. The complex is composed of two ATP-binding proteins (PstB), two transmembrane proteins (PstC and PstA) and a solute-binding protein (PstS).

Its subcellular location is the cell inner membrane. It carries out the reaction phosphate(out) + ATP + H2O = ADP + 2 phosphate(in) + H(+). In terms of biological role, part of the ABC transporter complex PstSACB involved in phosphate import. Responsible for energy coupling to the transport system. The protein is Phosphate import ATP-binding protein PstB of Gluconobacter oxydans (strain 621H) (Gluconobacter suboxydans).